We begin with the raw amino-acid sequence, 309 residues long: Putative pyridoxal kinase C6F6.11c (309 aa).

The substrate site is built by serine 12 and tyrosine 123. Residues 182 to 183 (SS) and 209 to 221 (LIPV…RGTG) each bind ATP. Aspartate 222 lines the substrate pocket.

This sequence belongs to the pyridoxine kinase family. A divalent metal cation serves as cofactor.

The protein localises to the cytoplasm. It is found in the nucleus. The catalysed reaction is pyridoxal + ATP = pyridoxal 5'-phosphate + ADP + H(+). Functionally, required for synthesis of pyridoxal-5-phosphate from vitamin B6. The chain is Putative pyridoxal kinase C6F6.11c from Schizosaccharomyces pombe (strain 972 / ATCC 24843) (Fission yeast).